Reading from the N-terminus, the 271-residue chain is MATH domain and coiled-coil domain-containing protein At3g27040 (271 aa).

The 127-residue stretch at 7-133 (DKKFTWVIKN…NGEVKIVAEV (127 aa)) folds into the MATH domain. A coiled-coil region spans residues 230-271 (KLDWLEKKLKETGKSRLQEIEEDLKDLKVKCADMDALLDFLR).

This chain is MATH domain and coiled-coil domain-containing protein At3g27040, found in Arabidopsis thaliana (Mouse-ear cress).